Here is a 152-residue protein sequence, read N- to C-terminus: MSQPCPCGSADEYSLCCGRIVSGERVAPDPSHLMRSRYCAFVMKDADYLIKSWHPTCNAAAFRDDIIAGFANTRWLGLTIFEHTWSEAENTGYVSFIARFSEQGKTGAIIERSRFIKENGQWYYIDGTRPQLGRNDPCPCGSGKKFKKCCGQ.

This sequence belongs to the UPF0225 family.

The polypeptide is UPF0225 protein YchJ (Salmonella gallinarum (strain 287/91 / NCTC 13346)).